A 530-amino-acid polypeptide reads, in one-letter code: Phosphoenolpyruvate carboxykinase (ATP) (530 aa).

Residues Arg57, Tyr193, and Lys199 each coordinate substrate. ATP-binding positions include Lys199, His218, and 234–242; that span reads GLSGTGKTT. Mn(2+) is bound by residues Lys199 and His218. Asp255 provides a ligand contact to Mn(2+). ATP contacts are provided by Glu283, Arg320, and Thr445. Arg320 is a substrate binding site.

Belongs to the phosphoenolpyruvate carboxykinase (ATP) family. It depends on Mn(2+) as a cofactor.

The protein resides in the cytoplasm. The catalysed reaction is oxaloacetate + ATP = phosphoenolpyruvate + ADP + CO2. It participates in carbohydrate biosynthesis; gluconeogenesis. In terms of biological role, involved in the gluconeogenesis. Catalyzes the conversion of oxaloacetate (OAA) to phosphoenolpyruvate (PEP) through direct phosphoryl transfer between the nucleoside triphosphate and OAA. This is Phosphoenolpyruvate carboxykinase (ATP) from Leptospira biflexa serovar Patoc (strain Patoc 1 / Ames).